Consider the following 418-residue polypeptide: Type II methyltransferase M.MspI (418 aa).

Residues 105 to 404 form the SAM-dependent MTase C5-type domain; the sequence is FKFIDLFSGI…EQISLALKTV (300 aa). C174 is a catalytic residue.

It belongs to the class I-like SAM-binding methyltransferase superfamily. C5-methyltransferase family.

It catalyses the reaction a 2'-deoxycytidine in DNA + S-adenosyl-L-methionine = a 5-methyl-2'-deoxycytidine in DNA + S-adenosyl-L-homocysteine + H(+). In terms of biological role, a methylase, recognizes the double-stranded sequence 5'-CCGG-3', methylates C-1 on both strands, and protects the DNA from cleavage by the MspI endonuclease. The protein is Type II methyltransferase M.MspI (mspIM) of Moraxella sp.